Reading from the N-terminus, the 80-residue chain is Exodeoxyribonuclease 7 small subunit (80 aa).

The protein belongs to the XseB family. As to quaternary structure, heterooligomer composed of large and small subunits.

Its subcellular location is the cytoplasm. The catalysed reaction is Exonucleolytic cleavage in either 5'- to 3'- or 3'- to 5'-direction to yield nucleoside 5'-phosphates.. Functionally, bidirectionally degrades single-stranded DNA into large acid-insoluble oligonucleotides, which are then degraded further into small acid-soluble oligonucleotides. This chain is Exodeoxyribonuclease 7 small subunit, found in Edwardsiella ictaluri (strain 93-146).